Here is a 69-residue protein sequence, read N- to C-terminus: Bacteriocin microcin B17 (69 aa).

A propeptide spanning residues 1 to 26 (MELKASEFGVVLSVDALKLSRQSPLG) is cleaved from the precursor. Positions 39–40 (GS) form a cross-link, oxazole-4-carboxylic acid (Gly-Ser). Positions 40–41 (SC) form a cross-link, thiazole-4-carboxylic acid (Ser-Cys). 3 consecutive cross-links (thiazole-4-carboxylic acid (Gly-Cys)) follow at residues 47-48 (GC), 50-51 (GC), and 54-55 (GC). The oxazole-4-carboxylic acid (Cys-Ser) cross-link spans 55 to 56 (CS). 2 cross-links (oxazole-4-carboxylic acid (Gly-Ser)) span residues 61–62 (GS) and 64–65 (GS).

Post-translationally, the processed N-terminus does not resemble a typical secretion signal sequence. In terms of processing, maturation of thiazole and oxazole containing antibiotics involves the enzymatic condensation of a Cys, Ser or Thr with the alpha-carbonyl of the preceding amino acid to form a thioether or ether bond, then dehydration to form a double bond with the alpha-amino nitrogen. Thiazoline or oxazoline rings are dehydrogenated to form thiazole or oxazole rings.

This glycine-rich peptide antibiotic inhibits DNA replication in many enteric bacteria, that leads to induction of the SOS repair system, massive DNA degradation and cell death. B17 inhibits type II topoisomerase by trapping an enzyme - DNA cleavable complex. The sequence is that of Bacteriocin microcin B17 (mcbA) from Escherichia coli.